Consider the following 1209-residue polypeptide: Neural cell adhesion molecule L1-like protein (1209 aa).

The first 25 residues, Met-1–Ala-25, serve as a signal peptide directing secretion. Topologically, residues Glu-26–Trp-1083 are extracellular. Ig-like C2-type domains lie at Pro-35 to Glu-124 and Pro-128 to Thr-223. Intrachain disulfides connect Cys-57–Cys-109 and Cys-153–Cys-204. Residue Asn-87 is glycosylated (N-linked (GlcNAc...) asparagine). N-linked (GlcNAc...) asparagine glycans are attached at residues Asn-225 and Asn-299. 4 Ig-like C2-type domains span residues Pro-235–Glu-328, Pro-331–Asp-417, Pro-423–Asp-510, and Thr-515–Thr-607. Disulfide bonds link Cys-262/Cys-310, Cys-352/Cys-401, Cys-445/Cys-494, and Cys-536/Cys-591. N-linked (GlcNAc...) asparagine glycosylation is present at Asn-476. The DGEA signature appears at Asp-555–Ala-558. N-linked (GlcNAc...) asparagine glycosylation is found at Asn-562 and Asn-580. 4 Fibronectin type-III domains span residues Pro-614–Ala-709, Asn-714–Asp-807, Ala-812–Gly-914, and Gln-918–Gly-1015. The disordered stretch occupies residues His-696 to Asn-717. Residues Asn-767, Asn-822, Asn-945, and Asn-1027 are each glycosylated (N-linked (GlcNAc...) asparagine). Residues Phe-1084–Val-1104 form a helical membrane-spanning segment. The Cytoplasmic portion of the chain corresponds to Lys-1105–Ala-1209. Over residues Lys-1115–Thr-1133 the composition is skewed to basic and acidic residues. The disordered stretch occupies residues Lys-1115–Glu-1170. A phosphoserine mark is found at Ser-1148, Ser-1161, and Ser-1181. Positions Arg-1150–Ala-1162 are enriched in polar residues. The FIG[AQ]Y motif lies at Phe-1182–Tyr-1186.

Belongs to the immunoglobulin superfamily. L1/neurofascin/NgCAM family. May interact with L1CAM. May interact with ITGB1/ITGA1 heterodimer and ITGB1/ITGA2 heterodimer as well as with ANK3. Post-translationally, cleavage by metalloprotease ADAM8 in the extracellular part generates 2 soluble forms (125 kDa and 165 kDa) in vitro and is inhibited by metalloprotease inhibitors. In brain extracts, these two soluble forms are also present and are dramatically reduced in mice lacking ADAM8. Cleaved by BACE1. N-glycosylated. Contains N-linked oligosaccharides with a sulfated carbohydrate structure type HNK-1 (SO4-3-GlcUABeta1,3GalBeta1,4GlcNAc). In terms of processing, O-glycosylated. In terms of tissue distribution, expressed in the brain, in the cerebellum and in the spinal cord. Detected in the retina and the optic nerve. Expressed in neurons and glial cells in the central nervous system and by Schwann cells in the peripheral nervous system.

The protein resides in the cell membrane. It localises to the secreted. Its subcellular location is the extracellular space. The protein localises to the extracellular matrix. Functionally, extracellular matrix and cell adhesion protein that plays a role in nervous system development and in synaptic plasticity. Both soluble and membranous forms promote neurite outgrowth of cerebellar and hippocampal neurons and suppress neuronal cell death. Plays a role in neuronal positioning of pyramidal neurons as well as in regulation of both the number of interneurons and the efficacy of GABAergic synapses. May play a role in regulating cell migration in nerve regeneration and cortical development. Potentiates integrin-dependent cell migration towards extracellular matrix proteins. Recruits ANK3 to the plasma membrane. The protein is Neural cell adhesion molecule L1-like protein (Chl1) of Mus musculus (Mouse).